The sequence spans 486 residues: Cobyric acid synthase (486 aa).

The GATase cobBQ-type domain maps to 251-439 (RAKIVVPMLS…VHGLFERGEA (189 aa)). The active-site Nucleophile is Cys-333. The active site involves His-431.

Belongs to the CobB/CobQ family. CobQ subfamily.

The protein operates within cofactor biosynthesis; adenosylcobalamin biosynthesis. Functionally, catalyzes amidations at positions B, D, E, and G on adenosylcobyrinic A,C-diamide. NH(2) groups are provided by glutamine, and one molecule of ATP is hydrogenolyzed for each amidation. The sequence is that of Cobyric acid synthase from Caulobacter sp. (strain K31).